The sequence spans 598 residues: UvrABC system protein C (598 aa).

A GIY-YIG domain is found at 11-91 (QKPGVYIMHN…IKKYRPHYNI (81 aa)). The region spanning 195–230 (KTTIKKLKKDMNRYAKNMEFEKAAMLRDQIDTIKIT) is the UVR domain.

It belongs to the UvrC family. As to quaternary structure, interacts with UvrB in an incision complex.

The protein resides in the cytoplasm. Its function is as follows. The UvrABC repair system catalyzes the recognition and processing of DNA lesions. UvrC both incises the 5' and 3' sides of the lesion. The N-terminal half is responsible for the 3' incision and the C-terminal half is responsible for the 5' incision. This Methanosphaera stadtmanae (strain ATCC 43021 / DSM 3091 / JCM 11832 / MCB-3) protein is UvrABC system protein C.